A 465-amino-acid polypeptide reads, in one-letter code: Mothers against decapentaplegic homolog 1 (465 aa).

One can recognise an MH1 domain in the interval 12–136 (PAVKRLLGWK…YKRVESPVLP (125 aa)). Zn(2+)-binding residues include C64, C109, C121, and H126. The disordered stretch occupies residues 161–240 (QNEPHMPHNA…EDQMTHDTSQ (80 aa)). Residues 179-210 (PNSHPFPHSPNSSYPNSPGSSSSTYPHSPASS) show a composition bias toward low complexity. In terms of domain architecture, MH2 spans 271–465 (WCSIVYYELN…SPHNPISSVS (195 aa)). 2 positions are modified to phosphoserine: S463 and S465.

It belongs to the dwarfin/SMAD family. Found in a complex with SMAD4 and YY1. Interacts with HGS, NANOG and ZCCHC12. Upon C-terminus phosphorylation: forms trimers with another SMAD1 and the co-SMAD SMAD4. Interacts with PEBP2-alpha subunit, CREB-binding protein (CBP), p300, SMURF1, SMURF2, USP15 and HOXC8. Associates with ZNF423 or ZNF521 in response to BMP2 leading to activate transcription of BMP target genes. Interacts with SKOR1. Interacts (via MH2 domain) with LEMD3. Binding to LEMD3 results in at least a partial reduction of receptor-mediated phosphorylation. Forms a ternary complex with PSMB4 and OAZ1 before PSMB4 is incorporated into the 20S proteasome. Found in a macromolecular complex with FAM83G. Interacts (via MH2 domain) with FAM83G (via MH2 domain); in a SMAD4-independent manner. Interacts with ZC3H3. Interacts with TMEM119. Interacts (via MH1 and MH2 domains) with ZNF8. Interacts with RANBP3L; the interaction increases when SMAD1 is not phosphorylated and mediates SMAD1 nuclear export. Interacts with EGR1; this interaction inhibits SMAD1 dephosphorylation. Interacts with SMAD6. Interacts with YAP1. Post-translationally, phosphorylation of the C-terminal SVS motif by BMP type 1 receptor kinase activates SMAD1 by promoting dissociation from the receptor and trimerization with SMAD4. Phosphorylation by ERK2 MAP kinase in response to EGF or HGF prevents SMAD1 nuclear accumulation and transcriptional activity in response to BMP. Dephosphorylation, probably by PPM1A, induces its export from the nucleus to the cytoplasm. Dephosphorylation is inhibited by association with EGR1. Phosphorylation by CDK8/9 creates binding sites for YAP1, and subsequent phosphorylation by GSK3 switches off YAP1 binding and adds binding sites for SMURF1. Ubiquitinated by SMAD-specific E3 ubiquitin ligase SMURF1, leading to its degradation. Monoubiquitinated, leading to prevent DNA-binding. Deubiquitination by USP15 alleviates inhibition and promotes activation of TGF-beta target genes. Dephosphorylation, probably by PPM1A, induces its export from the nucleus to the cytoplasm. Phospho-SMAD1 is ubiquitinated by CHIP leading to disruption of the SMAD1-SMAD4 complex.

The protein localises to the cytoplasm. It is found in the nucleus. Its function is as follows. Transcriptional modulator that plays a role in various cellular processes, including embryonic development, cell differentiation, and tissue homeostasis. Upon BMP ligand binding to their receptors at the cell surface, is phosphorylated by activated type I BMP receptors (BMPRIs) and associates with SMAD4 to form an heteromeric complex which translocates into the nucleus acting as transcription factor. In turn, the hetero-trimeric complex recognizes cis-regulatory elements containing Smad Binding Elements (SBEs) to modulate the outcome of the signaling network. SMAD1/OAZ1/PSMB4 complex mediates the degradation of the CREBBP/EP300 repressor SNIP1. The sequence is that of Mothers against decapentaplegic homolog 1 (SMAD1) from Coturnix japonica (Japanese quail).